The following is a 977-amino-acid chain: Receptor protein-tyrosine kinase CEPR2 (977 aa).

Positions 1 to 31 (MSRRPDLLRGSVVATVAATFLLFIFPPNVES) are cleaved as a signal peptide. The Extracellular portion of the chain corresponds to 32-620 (TVEKQALFRF…NVKRNSSLDG (589 aa)). Asn-85 carries an N-linked (GlcNAc...) asparagine glycan. LRR repeat units follow at residues 97–121 (LTKLSTLSLPSNFISGRIPPEIVNC), 122–146 (KNLKVLNLTSNRLSGTIPNLSPLKS), 148–167 (EILDISGNFLNGEFQSWIGN), 168–192 (MNQLVSLGLGNNHYEEGIIPESIGG), 193–217 (LKKLTWLFLARSNLTGKIPNSIFDL), 219–241 (ALDTFDIANNAISDDFPILISRL), 242–265 (VNLTKIELFNNSLTGKIPPEIKNL), 266–288 (TRLREFDISSNQLSGVLPEELGV), 290–312 (KELRVFHCHENNFTGEFPSGFGD), 313–338 (LSHLTSLSIYRNNFSGEFPVNIGRFS), 340–361 (LDTVDISENEFTGPFPRFLCQN), 363–385 (KLQFLLALQNEFSGEIPRSYGEC), 386–409 (KSLLRLRINNNRLSGQVVEGFWSL), 411–433 (LAKMIDLSDNELTGEVSPQIGLS), 434–457 (TELSQLILQNNRFSGKIPRELGRL), 458–481 (TNIERIYLSNNNLSGEIPMEVGDL), 482–504 (KELSSLHLENNSLTGFIPKELKN), 506–529 (VKLVDLNLAKNFLTGEIPNSLSQI), 530–553 (ASLNSLDFSGNRLTGEIPASLVKL), and 555–576 (LSFIDLSGNQLSGRIPPDLLAV). N-linked (GlcNAc...) asparagine glycosylation is present at Asn-128. N-linked (GlcNAc...) asparagine glycosylation is present at Asn-205. Residues Asn-243, Asn-251, and Asn-264 are each glycosylated (N-linked (GlcNAc...) asparagine). 2 N-linked (GlcNAc...) asparagine glycosylation sites follow: Asn-301 and Asn-325. Asn-469 and Asn-491 each carry an N-linked (GlcNAc...) asparagine glycan. N-linked (GlcNAc...) asparagine glycosylation occurs at Asn-615. The chain crosses the membrane as a helical span at residues 621-641 (TLLFLALAIVVVVLVSGLFAL). The Cytoplasmic portion of the chain corresponds to 642 to 977 (RYRVVKIREL…SQDTTGKITV (336 aa)). The region spanning 683-965 (LDEDHVIGSG…RKLDDADPCV (283 aa)) is the Protein kinase domain. Residues 689 to 697 (IGSGSAGKV) and Lys-712 each bind ATP. Tyr-801 is modified (phosphotyrosine). The active-site Proton acceptor is Asp-814. A Phosphoserine modification is found at Ser-846. Phosphotyrosine occurs at positions 854 and 861.

The protein belongs to the protein kinase superfamily. Ser/Thr protein kinase family. As to quaternary structure, interacts with the root-derived peptide CEP1. Binds to the ammonium transporter AMT1-1. As to expression, expressed in mature leaves, primary roots, and the root tips of both primary and lateral roots.

Its subcellular location is the cell membrane. The catalysed reaction is L-tyrosyl-[protein] + ATP = O-phospho-L-tyrosyl-[protein] + ADP + H(+). Receptor kinase involved in the perception of C-terminally encoded plant signaling peptide (CEP) and subsequent regulation of root and shoot development. Together with CEPR1, mediates systemic nitrogen (N)-demand signaling upon the perception of root-derived peptides (e.g. CEP1) via the up-regulation of genes involved in N uptake and assimilation pathways. The polypeptide is Receptor protein-tyrosine kinase CEPR2 (Arabidopsis thaliana (Mouse-ear cress)).